The sequence spans 315 residues: Putative protein phosphatase 2C 24 (315 aa).

A PPM-type phosphatase domain is found at 71–314 (ALRMEAASCF…DDITVVVAYI (244 aa)). 4 residues coordinate Mn(2+): Asp102, Gly103, Asp238, and Asp305.

This sequence belongs to the PP2C family. It depends on Mg(2+) as a cofactor. Mn(2+) serves as cofactor.

It carries out the reaction O-phospho-L-seryl-[protein] + H2O = L-seryl-[protein] + phosphate. The catalysed reaction is O-phospho-L-threonyl-[protein] + H2O = L-threonyl-[protein] + phosphate. This Oryza sativa subsp. japonica (Rice) protein is Putative protein phosphatase 2C 24.